The primary structure comprises 255 residues: MELLFDVGNSYTMVGIHQDGKFLTWRIGPSSFESEDGLFVIISNLLNRVNVDLNKITLAGISSVVPNVNFILEQMLKKYFNVEIIFVGTKNKINNIAYLVDYPKEVGADRICNVIACKQEYGDNVIALDFGTAITVDVLEGGNFVGGAIIPGFKTAIGALFSRTAQLPKVEIKIPEYHLGKNTIDNIQIGVIKTTLYGIERLIDEIKRERNKDFVVVATGGDMSFLSSKISIFKHYDPYLTLKGILYYSKEIKKL.

6-13 (DVGNSYTM) lines the ATP pocket. Residue 107–110 (GADR) participates in substrate binding. Residue D109 is the Proton acceptor of the active site. Residue D129 coordinates K(+). ATP is bound at residue T132. A substrate-binding site is contributed by T183.

Belongs to the type III pantothenate kinase family. In terms of assembly, homodimer. The cofactor is NH4(+). Requires K(+) as cofactor.

The protein resides in the cytoplasm. It carries out the reaction (R)-pantothenate + ATP = (R)-4'-phosphopantothenate + ADP + H(+). The protein operates within cofactor biosynthesis; coenzyme A biosynthesis; CoA from (R)-pantothenate: step 1/5. In terms of biological role, catalyzes the phosphorylation of pantothenate (Pan), the first step in CoA biosynthesis. In Petrotoga mobilis (strain DSM 10674 / SJ95), this protein is Type III pantothenate kinase.